The chain runs to 222 residues: Transmembrane reductase CYB561D2 (222 aa).

Over 2–17 (ALSVETESHIYRALRT) the chain is Cytoplasmic. Residues 14–217 (ALRTASGAAA…NQVSNAYLYR (204 aa)) enclose the Cytochrome b561 domain. The chain crosses the membrane as a helical span at residues 18-38 (ASGAAAHLVALGFTIFVAVLA). The Lumenal portion of the chain corresponds to 39–46 (RPGSSLFS). A helical membrane pass occupies residues 47 to 67 (WHPVLMSLAFSFLMTEALLMF). His48 is a binding site for heme b. The Cytoplasmic segment spans residues 68 to 85 (SPESSLLRSLSRKVRARC). Positions 86 and 120 each coordinate heme b. The chain crosses the membrane as a helical span at residues 86 to 106 (HWVLQLLALLCALLGLGLVIL). Topologically, residues 107 to 122 (HKEQLGKAHLTTRHGQ) are lumenal. Residues 123–143 (AGLLAVLWAGLQCSGGMGLLY) traverse the membrane as a helical segment. Residues 144–162 (PKLLPRWPLAKLKLYHATS) lie on the Cytoplasmic side of the membrane. His159 provides a ligand contact to heme b. A helical transmembrane segment spans residues 163–183 (GLVGYLLGSASLLLGMFSLWF). Topologically, residues 184–186 (TAT) are lumenal. Residues 187 to 207 (VTGGAWYLAVLCPILTSLVIM) form a helical membrane-spanning segment. Over 208 to 222 (NQVSNAYLYRKRIQP) the chain is Cytoplasmic.

The cofactor is heme b. In terms of tissue distribution, highly expressed in the brain, lung, liver, and kidney. Moderately expressed in the heart, placenta, skeletal muscle, and pancreas.

Its subcellular location is the endoplasmic reticulum membrane. The protein localises to the cytoplasmic vesicle membrane. It carries out the reaction monodehydro-L-ascorbate radical(out) + L-ascorbate(in) = monodehydro-L-ascorbate radical(in) + L-ascorbate(out). It catalyses the reaction Fe(3+)(out) + L-ascorbate(in) = monodehydro-L-ascorbate radical(in) + Fe(2+)(out) + H(+). Functionally, transmembrane reductase that may use ascorbate as an electron donor in the cytoplasm and transfer electrons across endoplasmic reticulum membranes to reduce monodehydro-L-ascorbate radical and iron cations Fe(3+) in the lumen of that compartment. This Mus musculus (Mouse) protein is Transmembrane reductase CYB561D2.